The primary structure comprises 805 residues: Transcription factor SFL1 (805 aa).

A compositionally biased stretch (low complexity) spans 1–24; sequence MSHLVSSSLGTTTTATPTSRSPHT. Residues 1–110 form a disordered region; that stretch reads MSHLVSSSLG…NNNVSNNNST (110 aa). A compositionally biased stretch (polar residues) spans 25 to 69; it reads NHSTPYNQNSITSNRSSPVPKNSVNSRIIPQTMNPPIDMKSNNIL. Residues 71 to 85 are compositionally biased toward basic and acidic residues; the sequence is PEKDTDTSRGDHSES. The span at 86 to 110 shows a compositional bias: low complexity; the sequence is KASSISSASGTTTTNNNNVSNNNST. The DNA-binding element occupies 117–226; it reads FIHKLYDMLH…LKNIKRRSSK (110 aa). Disordered regions lie at residues 273 to 336, 438 to 483, 513 to 675, 691 to 746, and 759 to 805; these read MQSP…NQSP, QSNF…VAPQ, REDS…PAPQ, HQKS…SENH, and VSEL…RKLE. Over residues 295 to 310 the composition is skewed to low complexity; it reads QQQQQQQQQQQQQQQQ. Composition is skewed to polar residues over residues 454–480 and 533–556; these read HGNS…NLNV and PSRN…NFNP. Over residues 557 to 566 the composition is skewed to low complexity; it reads QQSQSQSQVQ. 3 stretches are compositionally biased toward polar residues: residues 581 to 597, 604 to 614, and 622 to 635; these read ESTY…SQIL, VNHSPLVQQQQ, and NDSS…SSLP. A compositionally biased stretch (low complexity) spans 637–659; that stretch reads TRPLSRQQQQQQQTLHHPSTTSS. Polar residues predominate over residues 716-738; it reads PISSTAPTTMITSTSKPTSTSGA.

It belongs to the HSF family.

The protein resides in the nucleus. Its function is as follows. Transcription factor that plays a role of repressor of filamentous growth and flocculation. Antagonizes functions of SFL2 and FLO8. Plays a role in the hyphal repression induced by secreted factors like dodecanol by competitors such as Pseudomonas aeruginosa and Burkholderia cenocepacia. This Candida albicans (strain SC5314 / ATCC MYA-2876) (Yeast) protein is Transcription factor SFL1 (SFL1).